Reading from the N-terminus, the 644-residue chain is Chaperone protein HtpG (644 aa).

An a; substrate-binding region spans residues 1 to 352 (MNARVEQLEF…AQDMSLNVSR (352 aa)). The segment at 353 to 566 (EILQQDRQIK…AFGITPALAR (214 aa)) is b. A c region spans residues 567 to 644 (LYRASGQDIP…ILADRLARTL (78 aa)).

The protein belongs to the heat shock protein 90 family. In terms of assembly, homodimer.

Its subcellular location is the cytoplasm. In terms of biological role, molecular chaperone. Has ATPase activity. This chain is Chaperone protein HtpG, found in Mycobacterium avium (strain 104).